Here is a 224-residue protein sequence, read N- to C-terminus: 7-cyano-7-deazaguanine synthase (224 aa).

9 to 19 (LSGGLDSATVL) provides a ligand contact to ATP. Positions 189, 199, 202, and 205 each coordinate Zn(2+).

The protein belongs to the QueC family. The cofactor is Zn(2+).

The catalysed reaction is 7-carboxy-7-deazaguanine + NH4(+) + ATP = 7-cyano-7-deazaguanine + ADP + phosphate + H2O + H(+). The protein operates within purine metabolism; 7-cyano-7-deazaguanine biosynthesis. In terms of biological role, catalyzes the ATP-dependent conversion of 7-carboxy-7-deazaguanine (CDG) to 7-cyano-7-deazaguanine (preQ(0)). This Ralstonia pickettii (strain 12J) protein is 7-cyano-7-deazaguanine synthase.